Here is a 173-residue protein sequence, read N- to C-terminus: Putative metal-dependent hydrolase BC_2708 (173 aa).

Residues His-65, His-156, and His-160 each contribute to the Zn(2+) site.

The protein belongs to the metal hydrolase YfiT family. Homodimer. Requires Zn(2+) as cofactor.

The protein resides in the cytoplasm. Possible metal-dependent hydrolase. This chain is Putative metal-dependent hydrolase BC_2708, found in Bacillus cereus (strain ATCC 14579 / DSM 31 / CCUG 7414 / JCM 2152 / NBRC 15305 / NCIMB 9373 / NCTC 2599 / NRRL B-3711).